Consider the following 138-residue polypeptide: Basic phospholipase A2 Sct-N6 (138 aa).

The N-terminal stretch at 1-16 (MRTFWIVAVLLVGVEG) is a signal peptide. 7 cysteine pairs are disulfide-bonded: cysteine 42-cysteine 131, cysteine 44-cysteine 60, cysteine 59-cysteine 111, cysteine 65-cysteine 138, cysteine 66-cysteine 104, cysteine 73-cysteine 97, and cysteine 91-cysteine 102. Positions 43, 45, and 47 each coordinate Ca(2+). The active site involves histidine 63. Aspartate 64 is a Ca(2+) binding site. The active site involves aspartate 105.

The protein belongs to the phospholipase A2 family. Group II subfamily. D49 sub-subfamily. The cofactor is Ca(2+). In terms of tissue distribution, expressed by the venom gland.

The protein localises to the secreted. The enzyme catalyses a 1,2-diacyl-sn-glycero-3-phosphocholine + H2O = a 1-acyl-sn-glycero-3-phosphocholine + a fatty acid + H(+). Its function is as follows. Snake venom phospholipase A2 (PLA2) that displays edema-inducing activities, as well as presynaptic neurotoxicity and low myotoxicity. PLA2 catalyzes the calcium-dependent hydrolysis of the 2-acyl groups in 3-sn-phosphoglycerides. The sequence is that of Basic phospholipase A2 Sct-N6 from Sistrurus tergeminus (Western massasauga).